A 142-amino-acid chain; its full sequence is Putative mating-type transcription factor (142 aa).

The protein resides in the nucleus. This chain is Putative mating-type transcription factor, found in Eremothecium gossypii (strain ATCC 10895 / CBS 109.51 / FGSC 9923 / NRRL Y-1056) (Yeast).